Reading from the N-terminus, the 203-residue chain is Ras-related protein Rab-13 (203 aa).

GTP contacts are provided by serine 17, glycine 18, glycine 20, lysine 21, threonine 22, cysteine 23, and threonine 40. Threonine 22 is a Mg(2+) binding site. Residues 31–45 carry the Switch 1 motif; sequence DNFNNTYISTIGIDF. Position 40 (threonine 40) interacts with Mg(2+). A Glycyl lysine isopeptide (Lys-Gly) (interchain with G-Cter in ubiquitin) cross-link involves residue lysine 58. Aspartate 63 contributes to the Mg(2+) binding site. A Switch 2 motif is present at residues 63–80; that stretch reads DTAGQERFKTITTAYYRG. GTP contacts are provided by glycine 66, asparagine 121, lysine 122, aspartate 124, alanine 152, and lysine 153. The residue at position 200 (cysteine 200) is a Cysteine methyl ester. Cysteine 200 carries S-geranylgeranyl cysteine lipidation. A propeptide spans 201–203 (removed in mature form); that stretch reads SLA.

It belongs to the small GTPase superfamily. Rab family. As to quaternary structure, interacts (GTP-bound form) with MICALL2; competes with RAB8A and is involved in tight junctions assembly. Interacts (GTP-bound form) with MICALL1. Interacts (GTP-bound form) with MICAL1, MICAL3, MICALCL, EHBP1 and EHBP1L1; ternary complexes of RAB8A, RAB13 and either MICAL1 or EHBP1L1 are possible. Interacts with PRKACA; downstream effector of RAB13 involved in tight junction assembly. Interacts with GRB2; may recruit RAB13 to the leading edge of migrating endothelial cells where it can activate RHOA. Interacts (isoprenylated form) with PDE6D; dissociates RAB13 from membranes. Interacts with BICDL2/BICDR2. Interacts with LEPROT and LEPROTL1. Mg(2+) is required as a cofactor. Ubiquitinated via 'Lys-11'-linked ubiquitination on Lys-58; impairing the recruitment of guanosine diphosphate (GDP) dissociation inhibitor 1/GDI1.

The protein localises to the cell membrane. It is found in the cytoplasmic vesicle membrane. Its subcellular location is the cell junction. The protein resides in the tight junction. It localises to the golgi apparatus. The protein localises to the trans-Golgi network membrane. It is found in the recycling endosome membrane. Its subcellular location is the cell projection. The protein resides in the lamellipodium. The catalysed reaction is GTP + H2O = GDP + phosphate + H(+). Regulated by guanine nucleotide exchange factors (GEFs) including DENND1C, which promote the exchange of bound GDP for free GTP. Regulated by GTPase activating proteins (GAPs) which increase the GTP hydrolysis activity. Inhibited by GDP dissociation inhibitors (GDIs). Activated in response to insulin. Its function is as follows. The small GTPases Rab are key regulators of intracellular membrane trafficking, from the formation of transport vesicles to their fusion with membranes. Rabs cycle between an inactive GDP-bound form and an active GTP-bound form that is able to recruit to membranes different sets of downstream effectors directly responsible for vesicle formation, movement, tethering and fusion. RAB13 is involved in endocytic recycling and regulates the transport to the plasma membrane of transmembrane proteins like the tight junction protein OCLN/occludin. Thereby, it regulates the assembly and the activity of tight junctions. Moreover, it may also regulate tight junction assembly by activating the PKA signaling pathway and by reorganizing the actin cytoskeleton through the activation of the downstream effectors PRKACA and MICALL2 respectively. Through its role in tight junction assembly, may play a role in the establishment of Sertoli cell barrier. Plays also a role in angiogenesis through regulation of endothelial cells chemotaxis. Also involved in neurite outgrowth. Has also been proposed to play a role in post-Golgi membrane trafficking from the TGN to the recycling endosome. Finally, it has been involved in insulin-induced transport to the plasma membrane of the glucose transporter GLUT4 and therefore may play a role in glucose homeostasis. The chain is Ras-related protein Rab-13 (RAB13) from Bos taurus (Bovine).